A 247-amino-acid polypeptide reads, in one-letter code: 3-deoxy-manno-octulosonate cytidylyltransferase (247 aa).

Belongs to the KdsB family.

It is found in the cytoplasm. The enzyme catalyses 3-deoxy-alpha-D-manno-oct-2-ulosonate + CTP = CMP-3-deoxy-beta-D-manno-octulosonate + diphosphate. The protein operates within nucleotide-sugar biosynthesis; CMP-3-deoxy-D-manno-octulosonate biosynthesis; CMP-3-deoxy-D-manno-octulosonate from 3-deoxy-D-manno-octulosonate and CTP: step 1/1. Its pathway is bacterial outer membrane biogenesis; lipopolysaccharide biosynthesis. Its function is as follows. Activates KDO (a required 8-carbon sugar) for incorporation into bacterial lipopolysaccharide in Gram-negative bacteria. The sequence is that of 3-deoxy-manno-octulosonate cytidylyltransferase from Chlorobium phaeovibrioides (strain DSM 265 / 1930) (Prosthecochloris vibrioformis (strain DSM 265)).